Consider the following 342-residue polypeptide: Dihydroorotase (342 aa).

Residues His13 and His15 each coordinate Zn(2+). Substrate is bound by residues 15–17 and Asn41; that span reads HLR. Zn(2+)-binding residues include Lys98, His135, and His173. Lys98 is subject to N6-carboxylysine. His135 provides a ligand contact to substrate. Residue Leu218 participates in substrate binding. Asp246 contributes to the Zn(2+) binding site. The active site involves Asp246. His250 and Ala262 together coordinate substrate.

The protein belongs to the metallo-dependent hydrolases superfamily. DHOase family. Class II DHOase subfamily. In terms of assembly, homodimer. Requires Zn(2+) as cofactor.

The catalysed reaction is (S)-dihydroorotate + H2O = N-carbamoyl-L-aspartate + H(+). It participates in pyrimidine metabolism; UMP biosynthesis via de novo pathway; (S)-dihydroorotate from bicarbonate: step 3/3. Catalyzes the reversible cyclization of carbamoyl aspartate to dihydroorotate. This chain is Dihydroorotase, found in Vibrio cholerae serotype O1 (strain ATCC 39315 / El Tor Inaba N16961).